Reading from the N-terminus, the 138-residue chain is Small ribosomal subunit protein uS11c (138 aa).

Belongs to the universal ribosomal protein uS11 family. As to quaternary structure, part of the 30S ribosomal subunit.

It localises to the plastid. This is Small ribosomal subunit protein uS11c from Cuscuta obtusiflora (Peruvian dodder).